The primary structure comprises 312 residues: Malate dehydrogenase (312 aa).

Residues 12 to 17 (GAGFTG) and Asp-36 each bind NAD(+). Positions 87 and 93 each coordinate substrate. Residues Asn-100 and 123 to 125 (LTN) contribute to the NAD(+) site. Asn-125 is a substrate binding site. Ser-149 carries the post-translational modification Phosphoserine. Residue Arg-156 coordinates substrate. Residue His-180 is the Proton acceptor of the active site.

It belongs to the LDH/MDH superfamily. MDH type 3 family.

It catalyses the reaction (S)-malate + NAD(+) = oxaloacetate + NADH + H(+). Functionally, catalyzes the reversible oxidation of malate to oxaloacetate. The sequence is that of Malate dehydrogenase from Bacillus mycoides (strain KBAB4) (Bacillus weihenstephanensis).